The following is a 213-amino-acid chain: Ribonuclease HII (213 aa).

An RNase H type-2 domain is found at 27-213 (HAVAGVDEAG…FRGVKEHVAP (187 aa)). 3 residues coordinate a divalent metal cation: D33, E34, and D125.

Belongs to the RNase HII family. The cofactor is Mn(2+). Requires Mg(2+) as cofactor.

It is found in the cytoplasm. The catalysed reaction is Endonucleolytic cleavage to 5'-phosphomonoester.. In terms of biological role, endonuclease that specifically degrades the RNA of RNA-DNA hybrids. This chain is Ribonuclease HII, found in Geobacter metallireducens (strain ATCC 53774 / DSM 7210 / GS-15).